The chain runs to 286 residues: Bifunctional protein FolD (286 aa).

NADP(+) is bound by residues 165–167 (GRS) and Ser190.

Belongs to the tetrahydrofolate dehydrogenase/cyclohydrolase family. In terms of assembly, homodimer.

It carries out the reaction (6R)-5,10-methylene-5,6,7,8-tetrahydrofolate + NADP(+) = (6R)-5,10-methenyltetrahydrofolate + NADPH. The enzyme catalyses (6R)-5,10-methenyltetrahydrofolate + H2O = (6R)-10-formyltetrahydrofolate + H(+). It participates in one-carbon metabolism; tetrahydrofolate interconversion. Catalyzes the oxidation of 5,10-methylenetetrahydrofolate to 5,10-methenyltetrahydrofolate and then the hydrolysis of 5,10-methenyltetrahydrofolate to 10-formyltetrahydrofolate. This chain is Bifunctional protein FolD, found in Staphylococcus aureus (strain JH9).